The primary structure comprises 1958 residues: MFSLPSFLTTFSFTLPSLPSISLPANIQRRFLSYVLKRTLGRFVSHQALDAERIQAQVSEGWVEIENLEIECSEINNYIPPPLPLSLTSGTINKLTAKLPFPNLWSDPLQVSLDTLTLDFTLSSPSPLSRGRAATRPEHHDLAESVTSAADDFLHHELDAYEEKELEGSIRQSLILSQTDPFISDVPGGFPLGSPGEISPGRPLPANMESTTVLAGMVERILARLEFRVEKIKIRLVIEDEEDVVELTVGRIRYADESEAQTNDDGKSTTRAIRISNISLDIVPSQRKPPSLVIPQRQSLEPSVSSSTSTASTSSGNDYSDMFMSQAVVDLRQSLLTPEQISEPANEQTVHESNMFYSALSQPNESEPGASTGIKRSGISQNPKLADEIEEERSRSETPTPETKPQPSGIPVLSFGQEDVVLHMRTTRPLISAGHQTSFNDNKPTVEMNITIGTITTVLLPSHLKLFISALQTLQALCQKDDVPAAKDKPAQSTSPQTRLTATTKLKAFYVSLVYDLSAETSLNLHSTMASHLTRPTNPIPYPHLRFRLDTLVASYQSPGHSNPSRPAFTRPTPNMSTANLRRKSSGHARFGSLPSNLTVNVGDISLFEWMGEGMIAPVILFDPGLKHQYDLPSAPPHKGQAGFPECECRDWREEKKTGSEKAWRVRPRGRGILKGGARATTEDEGPVVHVRQDLGSDSAAVINLQSLHVFVDLSLIERLLPLLRSVTPLIHPPEPTPAWLQSVPSQSISEEITPESIISSLSAPPPTARGKKMKADIRCDLVRLSVRCPAPPPEPAERQIGDGRQLRSGIVFVDVHGLKSRFMDTSRTGTRPASSEVANVEFEQTLIFFASVSQHYAYPFLIFAPLSPEPGEEDIPLLPSISLSSFPQASSLPASSIAKTTLVTCKMPAIRASVHHPTVTGLQYFADDVTRWLDVAFADGSAKPRDELKMIGSRFFGGSKGSEASSEIDEPYDVEEVAAGMKVEIEISEIDMGLYVPRLDASGERVFSFKANDLGVRMETHPEENETALELSIMDLDFSDVSSTPLRILGRTTPFTLTSHQAPVVYLRFVSSTDLRTTLKESNISVALSHFTFAVHKEIAWLHEIAQFAKPPKGVFENLSPTDLTRLSINLSSASFLLVPPNLPGSIVILVREVEGKTEIPKGATDSVLEVGMSGLGALAVEGESGPLEVSSDLADVWKKAGYAQLAEVMVLELRLMRELVAAGEVSLDITQAQFKVTACADSLATFAEIATDFGRLFPNKKEEHVKLPSMGQSINVFDSLDENAFNLLPEIVSHSDTDMIEDDLPHNLDYLDHATRISKHYPSMDRTTGENLRAWHTPEEGLEEGEWENGESGETIRAFGGEIEEEEGYWEGLPILNDVYSADQKPGKIHIRVLDASLKIFLHDGYDWPRTRKAIEDEVRAVRRRLERIRQLLASGQKADESIENATSSVLFNSIYIGLEQKGEMGLSTMGMGKMDEKALMAAIDEELDGMETESGSSWQTLPAGVGAGPSAVHQAHKKTRLKGKRLVRSKKAQIEITLSGIKTDVDLYPTEESTSSRVHFTAKEMEILDHIKTSTWKKFLTEMKADNRGNIRETDADMLRIELVGVRLKEDEEELRLRAKILPLRLHVDQDALDFLKRFFSFKAPPMTSARPLAQHTTSSTPDLYFQHVEIFPIQLKLDYKPKRVDFRALREGKTIELMNFFHFEGAEMTLRHITLSGITGLERLGTTLQDLWTPDVKANQLADVISGVSPIRSMVNVGSGVADLILLPIEQYRKDGRIAKGVQRGTNSFVKSTALEVMKLGARLATGTQVILERAEGVLGGKSGEDVVGQVQGLSTNAFGVDSGMLEGGSSSEDEQEAISRYADQPESMKEGVQAAYKSLSKNVNAAAQTILAVPMEVYERSGDDGPLKAVIRAVPIAVLKPMIGTTEAVSKTLLGMRNSLDPSARRELDDKYK.

The Chorein N-terminal domain maps to 30–121 (RFLSYVLKRT…SLDTLTLDFT (92 aa)). Disordered stretches follow at residues 286–319 (QRKPPSLVIPQRQSLEPSVSSSTSTASTSSGNDY) and 360–412 (LSQP…GIPV). Low complexity predominate over residues 303-315 (SVSSSTSTASTSS). Polar residues predominate over residues 397–406 (ETPTPETKPQ).

The protein belongs to the ATG2 family.

The protein resides in the preautophagosomal structure membrane. The protein localises to the endoplasmic reticulum membrane. It carries out the reaction a 1,2-diacyl-sn-glycero-3-phosphocholine(in) = a 1,2-diacyl-sn-glycero-3-phosphocholine(out). It catalyses the reaction a 1,2-diacyl-sn-glycero-3-phospho-L-serine(in) = a 1,2-diacyl-sn-glycero-3-phospho-L-serine(out). The catalysed reaction is a 1,2-diacyl-sn-glycero-3-phosphoethanolamine(in) = a 1,2-diacyl-sn-glycero-3-phosphoethanolamine(out). Its function is as follows. Lipid transfer protein required for autophagosome completion and peroxisome degradation. Tethers the edge of the isolation membrane (IM) to the endoplasmic reticulum (ER) and mediates direct lipid transfer from ER to IM for IM expansion. ATG2 binds to the ER exit site (ERES), which is the membrane source for autophagosome formation, using basic residues in its N-terminal region (NR) and to the expanding edge of the IM through its C-terminal region. The latter binding is assisted by an ATG18-PtdIns3P interaction. ATG2 then extracts phospholipids from the membrane source using its NR and transfers them to ATG9 to the IM through its predicted beta-sheet-rich structure for membrane expansion. In Cryptococcus neoformans var. neoformans serotype D (strain JEC21 / ATCC MYA-565) (Filobasidiella neoformans), this protein is Autophagy-related protein 2 (ATG2).